Consider the following 130-residue polypeptide: Large ribosomal subunit protein bL20 (130 aa).

This sequence belongs to the bacterial ribosomal protein bL20 family.

Binds directly to 23S ribosomal RNA and is necessary for the in vitro assembly process of the 50S ribosomal subunit. It is not involved in the protein synthesizing functions of that subunit. The polypeptide is Large ribosomal subunit protein bL20 (Leifsonia xyli subsp. xyli (strain CTCB07)).